The sequence spans 145 residues: Ribonuclease P protein component (145 aa).

Low complexity predominate over residues 120 to 130 (LPAAPGTMPPA). The segment at 120–145 (LPAAPGTMPPARTMHPSSLSPTEPDL) is disordered. The span at 134 to 145 (HPSSLSPTEPDL) shows a compositional bias: polar residues.

This sequence belongs to the RnpA family. As to quaternary structure, consists of a catalytic RNA component (M1 or rnpB) and a protein subunit.

It carries out the reaction Endonucleolytic cleavage of RNA, removing 5'-extranucleotides from tRNA precursor.. Functionally, RNaseP catalyzes the removal of the 5'-leader sequence from pre-tRNA to produce the mature 5'-terminus. It can also cleave other RNA substrates such as 4.5S RNA. The protein component plays an auxiliary but essential role in vivo by binding to the 5'-leader sequence and broadening the substrate specificity of the ribozyme. The chain is Ribonuclease P protein component from Xanthomonas oryzae pv. oryzae (strain MAFF 311018).